The following is a 307-amino-acid chain: Aspartate carbamoyltransferase catalytic subunit (307 aa).

Positions 59 and 60 each coordinate carbamoyl phosphate. Lys-87 contacts L-aspartate. Carbamoyl phosphate-binding residues include Arg-109, His-139, and Gln-142. L-aspartate contacts are provided by Arg-172 and Arg-224. Ala-265 and Pro-266 together coordinate carbamoyl phosphate.

It belongs to the aspartate/ornithine carbamoyltransferase superfamily. ATCase family. As to quaternary structure, heterododecamer (2C3:3R2) of six catalytic PyrB chains organized as two trimers (C3), and six regulatory PyrI chains organized as three dimers (R2).

The catalysed reaction is carbamoyl phosphate + L-aspartate = N-carbamoyl-L-aspartate + phosphate + H(+). Its pathway is pyrimidine metabolism; UMP biosynthesis via de novo pathway; (S)-dihydroorotate from bicarbonate: step 2/3. In terms of biological role, catalyzes the condensation of carbamoyl phosphate and aspartate to form carbamoyl aspartate and inorganic phosphate, the committed step in the de novo pyrimidine nucleotide biosynthesis pathway. In Streptococcus agalactiae serotype Ia (strain ATCC 27591 / A909 / CDC SS700), this protein is Aspartate carbamoyltransferase catalytic subunit.